A 365-amino-acid polypeptide reads, in one-letter code: Carbamoyl phosphate synthase small chain (365 aa).

CPSase stretches follow at residues 1–166 (MKRQ…PSPG) and 1–169 (MKRQ…GRGH). L-glutamine is bound by residues S45, G218, and G220. Positions 170–357 (RVVLVDFGMK…LTMIENFKKE (188 aa)) constitute a Glutamine amidotransferase type-1 domain. The active-site Nucleophile is the C245. L246, Q249, N287, G289, and Y290 together coordinate L-glutamine. Active-site residues include H330 and E332.

It belongs to the CarA family. As to quaternary structure, composed of two chains; the small (or glutamine) chain promotes the hydrolysis of glutamine to ammonia, which is used by the large (or ammonia) chain to synthesize carbamoyl phosphate. Tetramer of heterodimers (alpha,beta)4.

It catalyses the reaction hydrogencarbonate + L-glutamine + 2 ATP + H2O = carbamoyl phosphate + L-glutamate + 2 ADP + phosphate + 2 H(+). The enzyme catalyses L-glutamine + H2O = L-glutamate + NH4(+). Its pathway is amino-acid biosynthesis; L-arginine biosynthesis; carbamoyl phosphate from bicarbonate: step 1/1. It participates in pyrimidine metabolism; UMP biosynthesis via de novo pathway; (S)-dihydroorotate from bicarbonate: step 1/3. In terms of biological role, small subunit of the glutamine-dependent carbamoyl phosphate synthetase (CPSase). CPSase catalyzes the formation of carbamoyl phosphate from the ammonia moiety of glutamine, carbonate, and phosphate donated by ATP, constituting the first step of 2 biosynthetic pathways, one leading to arginine and/or urea and the other to pyrimidine nucleotides. The small subunit (glutamine amidotransferase) binds and cleaves glutamine to supply the large subunit with the substrate ammonia. This is Carbamoyl phosphate synthase small chain from Bacillus cereus (strain ATCC 10987 / NRS 248).